Consider the following 350-residue polypeptide: Hydroxymethylglutaryl-CoA synthase (350 aa).

Catalysis depends on Glu83, which acts as the Proton donor/acceptor. The active-site Acyl-thioester intermediate is Cys115. Positions 115 and 156 each coordinate (3S)-3-hydroxy-3-methylglutaryl-CoA. Arg204 provides a ligand contact to CoA. 2 residues coordinate (3S)-3-hydroxy-3-methylglutaryl-CoA: Thr206 and His239. His239 serves as the catalytic Proton donor/acceptor. Residue Lys244 coordinates CoA. (3S)-3-hydroxy-3-methylglutaryl-CoA is bound by residues Asn271 and Ser301.

Belongs to the thiolase-like superfamily. Archaeal HMG-CoA synthase family. In terms of assembly, interacts with acetoacetyl-CoA thiolase that catalyzes the precedent step in the pathway and with a DUF35 protein. The acetoacetyl-CoA thiolase/HMG-CoA synthase complex channels the intermediate via a fused CoA-binding site, which allows for efficient coupling of the endergonic thiolase reaction with the exergonic HMGCS reaction.

It catalyses the reaction acetoacetyl-CoA + acetyl-CoA + H2O = (3S)-3-hydroxy-3-methylglutaryl-CoA + CoA + H(+). Its pathway is metabolic intermediate biosynthesis; (R)-mevalonate biosynthesis; (R)-mevalonate from acetyl-CoA: step 2/3. Catalyzes the condensation of acetyl-CoA with acetoacetyl-CoA to form 3-hydroxy-3-methylglutaryl-CoA (HMG-CoA). Functions in the mevalonate (MVA) pathway leading to isopentenyl diphosphate (IPP), a key precursor for the biosynthesis of isoprenoid compounds that are building blocks of archaeal membrane lipids. The chain is Hydroxymethylglutaryl-CoA synthase from Pyrococcus furiosus (strain ATCC 43587 / DSM 3638 / JCM 8422 / Vc1).